We begin with the raw amino-acid sequence, 424 residues long: Tol-Pal system protein TolB (424 aa).

Positions 1–16 (MKQLLVLILSLYTTLA) are cleaved as a signal peptide.

Belongs to the TolB family. The Tol-Pal system is composed of five core proteins: the inner membrane proteins TolA, TolQ and TolR, the periplasmic protein TolB and the outer membrane protein Pal. They form a network linking the inner and outer membranes and the peptidoglycan layer.

It localises to the periplasm. Functionally, part of the Tol-Pal system, which plays a role in outer membrane invagination during cell division and is important for maintaining outer membrane integrity. The sequence is that of Tol-Pal system protein TolB from Ruthia magnifica subsp. Calyptogena magnifica.